The chain runs to 1755 residues: Transposon Ty1-OR Gag-Pol polyprotein (1755 aa).

Polar residues-rich tracts occupy residues 1–10 (MESQQLSNYP), 48–60 (TKANSQQTTTPAS), and 127–152 (QSQFPQYPSSVGTPLSTPSPESGNTF). Disordered stretches follow at residues 1–93 (MESQ…MMTQ), 126–173 (PQSQ…RPPP), and 352–421 (GSRN…SKST). The span at 153–165 (TDSSSADSDMTST) shows a compositional bias: low complexity. Positions 299 to 401 (NNGIHINNKV…NSKSKTARAH (103 aa)) are RNA-binding. Residues 402–418 (NVSTSNNSPSTDNDSIS) are compositionally biased toward low complexity. Phosphoserine is present on Ser-416. Residue Asp-461 is the For protease activity; shared with dimeric partner of the active site. The interval 583–640 (NVHTSESTRKYPYPFIHRMLAHANAQTIRYSLKNNTITYFNESDVDWSSAIDYQCPDC) is integrase-type zinc finger-like. The 176-residue stretch at 660–835 (NSYEPFQYLH…AGLDISTLLP (176 aa)) folds into the Integrase catalytic domain. Mg(2+) is bound by residues Asp-671 and Asp-736. 3 disordered regions span residues 956–1087 (SKAV…ETEK), 1092–1111 (RSPSIDASPPENNSSHNIVP), and 1130–1187 (DLPL…DNET). Positions 960 to 969 (SPTDSTPPST) are enriched in low complexity. The span at 1005–1015 (STPQISNIEST) shows a compositional bias: polar residues. A compositionally biased stretch (basic and acidic residues) spans 1038–1053 (ESSHASKSKDFRHSDS). Composition is skewed to polar residues over residues 1054–1082 (YSENETNHTNVPISSTGGTNNKTVPQISD) and 1101–1111 (PENNSSHNIVP). The Bipartite nuclear localization signal signature appears at 1178–1212 (KKRSLEDNETEIKVSRDTWNTKNMRSLEPPRSKKR). The Reverse transcriptase Ty1/copia-type domain maps to 1338–1476 (NNYYITQLDI…DILGLEIKYQ (139 aa)). Mg(2+)-binding residues include Asp-1346, Asp-1427, Asp-1428, Asp-1610, Glu-1652, and Asp-1685. Positions 1610 to 1752 (DASYGNQPYY…IKTFKLLTNK (143 aa)) constitute an RNase H Ty1/copia-type domain.

In terms of assembly, the capsid protein forms a homotrimer, from which the VLPs are assembled. The protease is a homodimer, whose active site consists of two apposed aspartic acid residues. Post-translationally, initially, virus-like particles (VLPs) are composed of the structural unprocessed proteins Gag and Gag-Pol, and also contain the host initiator methionine tRNA (tRNA(i)-Met) which serves as a primer for minus-strand DNA synthesis, and a dimer of genomic Ty RNA. Processing of the polyproteins occurs within the particle and proceeds by an ordered pathway, called maturation. First, the protease (PR) is released by autocatalytic cleavage of the Gag-Pol polyprotein yielding capsid protein p45 and a Pol-p154 precursor protein. This cleavage is a prerequisite for subsequent processing of Pol-p154 at the remaining sites to release the mature structural and catalytic proteins. Maturation takes place prior to the RT reaction and is required to produce transposition-competent VLPs.

The protein localises to the cytoplasm. Its subcellular location is the nucleus. The enzyme catalyses DNA(n) + a 2'-deoxyribonucleoside 5'-triphosphate = DNA(n+1) + diphosphate. The catalysed reaction is Endonucleolytic cleavage to 5'-phosphomonoester.. Capsid protein (CA) is the structural component of the virus-like particle (VLP), forming the shell that encapsulates the retrotransposons dimeric RNA genome. The particles are assembled from trimer-clustered units and there are holes in the capsid shells that allow for the diffusion of macromolecules. CA also has nucleocapsid-like chaperone activity, promoting primer tRNA(i)-Met annealing to the multipartite primer-binding site (PBS), dimerization of Ty1 RNA and initiation of reverse transcription. Functionally, the aspartyl protease (PR) mediates the proteolytic cleavages of the Gag and Gag-Pol polyproteins after assembly of the VLP. Its function is as follows. Reverse transcriptase/ribonuclease H (RT) is a multifunctional enzyme that catalyzes the conversion of the retro-elements RNA genome into dsDNA within the VLP. The enzyme displays a DNA polymerase activity that can copy either DNA or RNA templates, and a ribonuclease H (RNase H) activity that cleaves the RNA strand of RNA-DNA heteroduplexes during plus-strand synthesis and hydrolyzes RNA primers. The conversion leads to a linear dsDNA copy of the retrotransposon that includes long terminal repeats (LTRs) at both ends. In terms of biological role, integrase (IN) targets the VLP to the nucleus, where a subparticle preintegration complex (PIC) containing at least integrase and the newly synthesized dsDNA copy of the retrotransposon must transit the nuclear membrane. Once in the nucleus, integrase performs the integration of the dsDNA into the host genome. The sequence is that of Transposon Ty1-OR Gag-Pol polyprotein (TY1B-OR) from Saccharomyces cerevisiae (strain ATCC 204508 / S288c) (Baker's yeast).